The chain runs to 448 residues: Adenylosuccinate synthetase (448 aa).

GTP-binding positions include 36–42 (GDEGKGK) and 64–66 (GHT). Aspartate 37 acts as the Proton acceptor in catalysis. The Mg(2+) site is built by aspartate 37 and glycine 64. IMP contacts are provided by residues 37-40 (DEGK), 62-65 (NAGH), threonine 154, arginine 168, asparagine 246, threonine 261, and arginine 325. Catalysis depends on histidine 65, which acts as the Proton donor. Position 321-327 (321-327 (VTTKRKR)) interacts with substrate. GTP-binding positions include arginine 327, 353–355 (KLD), and 436–438 (GVG).

It belongs to the adenylosuccinate synthetase family. Homodimer. Mg(2+) is required as a cofactor.

The protein resides in the cytoplasm. It catalyses the reaction IMP + L-aspartate + GTP = N(6)-(1,2-dicarboxyethyl)-AMP + GDP + phosphate + 2 H(+). It participates in purine metabolism; AMP biosynthesis via de novo pathway; AMP from IMP: step 1/2. Plays an important role in the de novo pathway and in the salvage pathway of purine nucleotide biosynthesis. Catalyzes the first committed step in the biosynthesis of AMP from IMP. This Drosophila ananassae (Fruit fly) protein is Adenylosuccinate synthetase.